Reading from the N-terminus, the 164-residue chain is DNA-binding protein inhibitor ID-1 (164 aa).

The 53-residue stretch at 46–98 (LPALLDEQQVNVLLYDMNGCYSRLKELVPTLPQNRKVSKVEILQHVIDYIRDL) folds into the bHLH domain. The short motif at 91–104 (VIDYIRDLQLELNS) is the Nuclear export signal element.

As to quaternary structure, heterodimer with other HLH proteins. Interacts with COPS5, IFI204, GATA4, NKX2-5, CLOCK and BMAL1. Isoform Short can form homodimers. Post-translationally, phosphorylated in vitro by PKA and PKC.

It localises to the cytoplasm. It is found in the nucleus. Functionally, transcriptional regulator (lacking a basic DNA binding domain) which negatively regulates the basic helix-loop-helix (bHLH) transcription factors by forming heterodimers and inhibiting their DNA binding and transcriptional activity. Implicated in regulating a variety of cellular processes, including cellular growth, senescence, differentiation, apoptosis, angiogenesis, and neoplastic transformation. Inhibits skeletal muscle and cardiac myocyte differentiation. Regulates the circadian clock by repressing the transcriptional activator activity of the CLOCK-BMAL1 heterodimer. This chain is DNA-binding protein inhibitor ID-1 (Id1), found in Rattus norvegicus (Rat).